Consider the following 184-residue polypeptide: Thymidine kinase (184 aa).

ATP is bound by residues 10-17 (GPMYSGKT) and 83-86 (DEVQ). The active-site Proton acceptor is the Glu84. Residues Cys140, Cys143, Cys173, and Cys176 each coordinate Zn(2+).

It belongs to the thymidine kinase family. Homotetramer.

It localises to the cytoplasm. The catalysed reaction is thymidine + ATP = dTMP + ADP + H(+). The sequence is that of Thymidine kinase from Thermotoga sp. (strain RQ2).